The sequence spans 58 residues: uncharacterized protein (58 aa).

Residues 5 to 27 (FLHANITIIPHSVLYVSLSYYII) traverse the membrane as a helical segment.

It is found in the membrane. This is an uncharacterized protein from Saccharomyces cerevisiae (strain ATCC 204508 / S288c) (Baker's yeast).